Reading from the N-terminus, the 172-residue chain is Small ribosomal subunit protein uS5 (172 aa).

The 64-residue stretch at methionine 17–valine 80 folds into the S5 DRBM domain.

The protein belongs to the universal ribosomal protein uS5 family. As to quaternary structure, part of the 30S ribosomal subunit. Contacts proteins S4 and S8.

Functionally, with S4 and S12 plays an important role in translational accuracy. Its function is as follows. Located at the back of the 30S subunit body where it stabilizes the conformation of the head with respect to the body. The polypeptide is Small ribosomal subunit protein uS5 (Paracidovorax citrulli (strain AAC00-1) (Acidovorax citrulli)).